The chain runs to 333 residues: tRNA N6-adenosine threonylcarbamoyltransferase (333 aa).

Positions 111 and 115 each coordinate Fe cation. Residues 134–138, D167, G180, and N272 each bind substrate; that span reads LVSGG. D300 is a binding site for Fe cation.

It belongs to the KAE1 / TsaD family. Requires Fe(2+) as cofactor.

It localises to the cytoplasm. The enzyme catalyses L-threonylcarbamoyladenylate + adenosine(37) in tRNA = N(6)-L-threonylcarbamoyladenosine(37) in tRNA + AMP + H(+). Required for the formation of a threonylcarbamoyl group on adenosine at position 37 (t(6)A37) in tRNAs that read codons beginning with adenine. Is involved in the transfer of the threonylcarbamoyl moiety of threonylcarbamoyl-AMP (TC-AMP) to the N6 group of A37, together with TsaE and TsaB. TsaD likely plays a direct catalytic role in this reaction. The chain is tRNA N6-adenosine threonylcarbamoyltransferase from Legionella pneumophila subsp. pneumophila (strain Philadelphia 1 / ATCC 33152 / DSM 7513).